The primary structure comprises 560 residues: Poly(3-hydroxyalkanoate) polymerase 2 (560 aa).

Cys-296 is an active-site residue.

The protein belongs to the PHA/PHB synthase family. Type II PhaC subfamily.

It participates in biopolymer metabolism; poly-(R)-3-hydroxybutanoate biosynthesis. Synthesizes poly(3-hydroxyalkanoates) (PHA), complements a mutant of P.putida that does not make PHA. The sequence is that of Poly(3-hydroxyalkanoate) polymerase 2 from Ectopseudomonas oleovorans (Pseudomonas oleovorans).